The sequence spans 401 residues: Golgi membrane protein 1 (401 aa).

An N-acetylmethionine modification is found at Met1. Residues 1–12 lie on the Cytoplasmic side of the membrane; that stretch reads MMGLGNGRRSMK. Residues 13 to 35 traverse the membrane as a helical; Signal-anchor for type II membrane protein segment; that stretch reads SPPLVLAALVACIIVLGFNYWIA. At 36–401 the chain is on the lumenal side; that stretch reads SSRSVDLQTR…DQREKRNHTL (366 aa). The stretch at 40–205 forms a coiled coil; sequence VDLQTRIMEL…QRQQLQALSE (166 aa). N-linked (GlcNAc...) (complex) asparagine glycosylation occurs at Asn109. An N-linked (GlcNAc...) asparagine glycan is attached at Asn144. Positions 178–401 are disordered; the sequence is TKKGNEAVAS…DQREKRNHTL (224 aa). Ser187 bears the Phosphoserine mark. Residues 228-238 show a composition bias toward polar residues; the sequence is LGNSKSQTPAP. Basic and acidic residues-rich tracts occupy residues 244 to 255 and 264 to 285; these read LDSKRQVEKEET and EPQR…DRPV. A compositionally biased stretch (gly residues) spans 286–295; that stretch reads GGRGFGGAGE. A compositionally biased stretch (polar residues) spans 298 to 312; that stretch reads QTPQVQAALSVSQEN. Ser309 bears the Phosphoserine; by FAM20C mark. Residues 350–360 show a composition bias toward acidic residues; the sequence is DYNMDENEAES. Positions 381–395 are enriched in basic and acidic residues; it reads EDQKRDTINLLDQRE. Residue Asn398 is glycosylated (N-linked (GlcNAc...) asparagine).

Belongs to the GOLM family. In terms of assembly, interacts with DYM. Glycosylated. Post-translationally, phosphorylation sites are present in the extracellular medium. As to expression, widely expressed. Highly expressed in colon, prostate, trachea and stomach. Expressed at lower level in testis, muscle, lymphoid tissues, white blood cells and spleen. Predominantly expressed by cells of the epithelial lineage. Expressed at low level in normal liver. Expression significantly increases in virus (HBV, HCV) infected liver. Expression does not increase in liver disease due to non-viral causes (alcohol-induced liver disease, autoimmune hepatitis). Increased expression in hepatocytes appears to be a general feature of advanced liver disease. In liver tissue from patients with adult giant-cell hepatitis (GCH), it is strongly expressed in hepatocytes-derived syncytial giant cells. Constitutively expressed by biliary epithelial cells but not by hepatocytes.

It localises to the golgi apparatus. The protein localises to the cis-Golgi network membrane. In terms of biological role, unknown. Cellular response protein to viral infection. This Homo sapiens (Human) protein is Golgi membrane protein 1 (GOLM1).